The sequence spans 36 residues: Potassium channel toxin alpha-KTx 16.9 (36 aa).

3 cysteine pairs are disulfide-bonded: cysteine 7–cysteine 28, cysteine 13–cysteine 33, and cysteine 17–cysteine 35.

Belongs to the short scorpion toxin superfamily. Potassium channel inhibitor family. Alpha-KTx 16 subfamily. As to expression, expressed by the venom gland.

The protein localises to the secreted. Poorly competes with (125)I-kaliotoxin binding on rat brain synaptosome (IC(50)&gt;100 nM). Is a poor Kv1.3/KCNA3 ligand. May have as real target KCa1.1/KCNMA1 channel. Shows weak toxicity on mice. In Buthus paris (Scorpion), this protein is Potassium channel toxin alpha-KTx 16.9.